Reading from the N-terminus, the 308-residue chain is Quinolinate synthase (308 aa).

2 residues coordinate iminosuccinate: His-24 and Ser-41. Cys-86 provides a ligand contact to [4Fe-4S] cluster. Iminosuccinate contacts are provided by residues 112–114 (YIN) and Ser-129. A [4Fe-4S] cluster-binding site is contributed by Cys-172. Iminosuccinate is bound by residues 198–200 (HPE) and Thr-215. Cys-265 contacts [4Fe-4S] cluster.

This sequence belongs to the quinolinate synthase family. Type 2 subfamily. [4Fe-4S] cluster is required as a cofactor.

It localises to the cytoplasm. It catalyses the reaction iminosuccinate + dihydroxyacetone phosphate = quinolinate + phosphate + 2 H2O + H(+). The protein operates within cofactor biosynthesis; NAD(+) biosynthesis; quinolinate from iminoaspartate: step 1/1. Functionally, catalyzes the condensation of iminoaspartate with dihydroxyacetone phosphate to form quinolinate. This is Quinolinate synthase from Sulfurihydrogenibium sp. (strain YO3AOP1).